Reading from the N-terminus, the 184-residue chain is Large ribosomal subunit protein uL6 (184 aa).

Belongs to the universal ribosomal protein uL6 family. As to quaternary structure, part of the 50S ribosomal subunit.

Functionally, this protein binds to the 23S rRNA, and is important in its secondary structure. It is located near the subunit interface in the base of the L7/L12 stalk, and near the tRNA binding site of the peptidyltransferase center. The protein is Large ribosomal subunit protein uL6 of Cytophaga hutchinsonii (strain ATCC 33406 / DSM 1761 / CIP 103989 / NBRC 15051 / NCIMB 9469 / D465).